The following is a 190-amino-acid chain: Putative protein p47 (190 aa).

The chain is Putative protein p47 (47) from Escherichia coli (Bacteriophage APSE-1).